The primary structure comprises 174 residues: Small heat shock protein OV25-1 (174 aa).

Residues 50-161 (LNECNIGNTL…ASRNIPIRAS (112 aa)) form the sHSP domain. Residues 153 to 174 (SRNIPIRASPKEPEAKQKTKKQ) are disordered. Residues 161–174 (SPKEPEAKQKTKKQ) show a composition bias toward basic and acidic residues.

It belongs to the small heat shock protein (HSP20) family.

This is Small heat shock protein OV25-1 (OV25-1) from Onchocerca volvulus.